The following is a 162-amino-acid chain: Large ribosomal subunit protein bL17 (162 aa).

Residues 126–162 are disordered; it reads ATAKKATRTRRSKKSAAATEAPAAPAAETTEEAPKAE. Residues 130 to 139 show a composition bias toward basic residues; the sequence is KATRTRRSKK. The segment covering 140–153 has biased composition (low complexity); the sequence is SAAATEAPAAPAAE.

The protein belongs to the bacterial ribosomal protein bL17 family. Part of the 50S ribosomal subunit. Contacts protein L32.

This Phocaeicola vulgatus (strain ATCC 8482 / DSM 1447 / JCM 5826 / CCUG 4940 / NBRC 14291 / NCTC 11154) (Bacteroides vulgatus) protein is Large ribosomal subunit protein bL17.